The following is a 662-amino-acid chain: Bifunctional polymyxin resistance protein ArnA (662 aa).

Residues 1–307 form a formyltransferase ArnAFT region; it reads MTSKAVVFAY…ELGLVEGARL (307 aa). His106 (proton donor; for formyltransferase activity) is an active-site residue. Residues Arg116 and 138 to 142 each bind (6R)-10-formyltetrahydrofolate; that span reads IERAD. A dehydrogenase ArnADH region spans residues 316 to 662; the sequence is RRTRVLILGV…EALREREAQA (347 aa). Residues Asp349 and 370 to 371 contribute to the NAD(+) site; that span reads DI. UDP-alpha-D-glucuronate is bound by residues Ala395, Tyr400, and 434–435; that span reads TS. The active-site Proton acceptor; for decarboxylase activity is Glu436. UDP-alpha-D-glucuronate is bound by residues Arg462, Asn493, 527-536, and Tyr614; that span reads RLVDGGAQKR. The Proton donor; for decarboxylase activity role is filled by Arg620.

The protein in the N-terminal section; belongs to the Fmt family. UDP-L-Ara4N formyltransferase subfamily. It in the C-terminal section; belongs to the NAD(P)-dependent epimerase/dehydratase family. UDP-glucuronic acid decarboxylase subfamily. As to quaternary structure, homohexamer, formed by a dimer of trimers.

It carries out the reaction UDP-alpha-D-glucuronate + NAD(+) = UDP-beta-L-threo-pentopyranos-4-ulose + CO2 + NADH. It catalyses the reaction UDP-4-amino-4-deoxy-beta-L-arabinose + (6R)-10-formyltetrahydrofolate = UDP-4-deoxy-4-formamido-beta-L-arabinose + (6S)-5,6,7,8-tetrahydrofolate + H(+). Its pathway is nucleotide-sugar biosynthesis; UDP-4-deoxy-4-formamido-beta-L-arabinose biosynthesis; UDP-4-deoxy-4-formamido-beta-L-arabinose from UDP-alpha-D-glucuronate: step 1/3. It functions in the pathway nucleotide-sugar biosynthesis; UDP-4-deoxy-4-formamido-beta-L-arabinose biosynthesis; UDP-4-deoxy-4-formamido-beta-L-arabinose from UDP-alpha-D-glucuronate: step 3/3. The protein operates within bacterial outer membrane biogenesis; lipopolysaccharide biosynthesis. In terms of biological role, bifunctional enzyme that catalyzes the oxidative decarboxylation of UDP-glucuronic acid (UDP-GlcUA) to UDP-4-keto-arabinose (UDP-Ara4O) and the addition of a formyl group to UDP-4-amino-4-deoxy-L-arabinose (UDP-L-Ara4N) to form UDP-L-4-formamido-arabinose (UDP-L-Ara4FN). The modified arabinose is attached to lipid A and is required for resistance to polymyxin and cationic antimicrobial peptides. The protein is Bifunctional polymyxin resistance protein ArnA of Pseudomonas aeruginosa (strain ATCC 15692 / DSM 22644 / CIP 104116 / JCM 14847 / LMG 12228 / 1C / PRS 101 / PAO1).